A 774-amino-acid polypeptide reads, in one-letter code: Ion-translocating oxidoreductase complex subunit C (774 aa).

4Fe-4S ferredoxin-type domains are found at residues 368-398 (ELTSSDNEMACIRCGQCAEACPVSLLPQQLQ) and 408-437 (KCEELDLKDCIECGACAYVCPSEIPLVQYY). Residues C378, C381, C384, C388, C417, C420, C423, and C427 each contribute to the [4Fe-4S] cluster site. Over residues 459-490 (ARFEEKKARMERDKAERENRFKQAAEDRRKEM) the composition is skewed to basic and acidic residues. 2 disordered regions span residues 459-496 (ARFEEKKARMERDKAERENRFKQAAEDRRKEMQQQGGS) and 533-774 (AKQA…EEKD). Residues 533–545 (AKQAEAAQSGASE) are compositionally biased toward low complexity. Over residues 550–572 (EMAKLREERKRQARERKAQKGEV) the composition is skewed to basic and acidic residues. Low complexity predominate over residues 605-618 (TESAAQPAQATPSS). 4 stretches are compositionally biased toward polar residues: residues 645–658 (TESTAQPAQATPSS), 686–698 (ESAAQPTQATPSS), 725–738 (TESAAQPTQATPSS), and 762–774 (QQSSSNLNAEEKD).

The protein belongs to the 4Fe4S bacterial-type ferredoxin family. RnfC subfamily. The complex is composed of six subunits: RnfA, RnfB, RnfC, RnfD, RnfE and RnfG. The cofactor is [4Fe-4S] cluster.

The protein resides in the cell inner membrane. Functionally, part of a membrane-bound complex that couples electron transfer with translocation of ions across the membrane. In Vibrio cholerae serotype O1 (strain ATCC 39315 / El Tor Inaba N16961), this protein is Ion-translocating oxidoreductase complex subunit C.